The primary structure comprises 702 residues: Pheromone-processing carboxypeptidase KEX1 (702 aa).

An N-terminal signal peptide occupies residues 1 to 19; that stretch reads MKLILSTLIVFIHTLLVSA. The Lumenal segment spans residues 20–555; sequence LPTKEGSDPN…SDSTSSKFTR (536 aa). 2 N-linked (GlcNAc...) asparagine glycosylation sites follow: Asn-85 and Asn-122. Active-site residues include Ser-184 and Asp-394. Asn-441 and Asn-449 each carry an N-linked (GlcNAc...) asparagine glycan. His-452 is a catalytic residue. Residues 491-548 form a disordered region; the sequence is SRKESDASADGEENAGSDKVPGDSPSQTIDPMISSSTASSSSVESSLSSSTASADSDS. Residues 524–548 show a composition bias toward low complexity; that stretch reads SSSTASSSSVESSLSSSTASADSDS. Residues 556–576 form a helical membrane-spanning segment; sequence LIQLAVILVIFWGVYVLYASY. Residues 577–702 lie on the Cytoplasmic side of the membrane; it reads KSRPSSIIKK…THNQKQKPMN (126 aa). 2 disordered regions span residues 582–603 and 660–702; these read SIIK…GKKK and IELG…KPMN. Composition is skewed to polar residues over residues 587 to 598 and 692 to 702; these read PTNNTSNVTRSS and ATHNQKQKPMN.

Belongs to the peptidase S10 family.

It is found in the golgi apparatus. The protein localises to the trans-Golgi network membrane. The catalysed reaction is Preferential release of a C-terminal arginine or lysine residue.. In terms of biological role, protease with a carboxypeptidase B-like function involved in the C-terminal processing of the lysine and arginine residues from protein precursors. Promotes cell fusion and is involved in the programmed cell death. The chain is Pheromone-processing carboxypeptidase KEX1 (KEX1) from Candida albicans (strain SC5314 / ATCC MYA-2876) (Yeast).